We begin with the raw amino-acid sequence, 204 residues long: Phosphoribosyl-dephospho-CoA transferase (204 aa).

Active-site residues include D129 and D131.

The protein belongs to the MdcG family.

It carries out the reaction apo-[malonate decarboxylase ACP] + 2'-(5''-triphospho-alpha-D-ribosyl)-3'-dephospho-CoA = holo-[malonate decarboxylase ACP] + diphosphate. Its function is as follows. Transfers 2'-(5-triphosphoribosyl)-3'-dephosphocoenzyme-A to the apo-[acyl-carrier-protein] of the malonate decarboxylase to yield holo-[acyl-carrier-protein]. The polypeptide is Phosphoribosyl-dephospho-CoA transferase (Pseudomonas putida (Arthrobacter siderocapsulatus)).